Consider the following 88-residue polypeptide: Putative regulatory protein AM1_5498 (88 aa).

It belongs to the RemA family.

In Acaryochloris marina (strain MBIC 11017), this protein is Putative regulatory protein AM1_5498.